The chain runs to 502 residues: Glucose-6-phosphate isomerase (502 aa).

Residue Glu331 is the Proton donor of the active site. Active-site residues include His362 and Lys471.

The protein belongs to the GPI family.

It is found in the cytoplasm. It carries out the reaction alpha-D-glucose 6-phosphate = beta-D-fructose 6-phosphate. It functions in the pathway carbohydrate biosynthesis; gluconeogenesis. The protein operates within carbohydrate degradation; glycolysis; D-glyceraldehyde 3-phosphate and glycerone phosphate from D-glucose: step 2/4. Its function is as follows. Catalyzes the reversible isomerization of glucose-6-phosphate to fructose-6-phosphate. The sequence is that of Glucose-6-phosphate isomerase from Xylella fastidiosa (strain M12).